The chain runs to 488 residues: Spermatogenesis-associated protein 6 (488 aa).

A signal peptide spans 1 to 20 (MPKVKALQCALALEISSVTC). The interval 176–199 (HGRLQNRTSRSQKKKSKSPERSKY) is disordered. Residue Asn-181 is glycosylated (N-linked (GlcNAc...) asparagine). Ser-217 and Ser-219 each carry phosphoserine. Lys-248 participates in a covalent cross-link: Glycyl lysine isopeptide (Lys-Gly) (interchain with G-Cter in SUMO2). Residues 256-275 (FVIRHVDPPSPRADTLLGSS) form a disordered region. Phosphoserine is present on residues Ser-265, Ser-274, Ser-325, Ser-343, Ser-346, Ser-354, Ser-424, Ser-465, and Ser-487.

This sequence belongs to the SPATA6 family. In terms of assembly, interacts with MYL6.

It is found in the secreted. Its subcellular location is the cell projection. It localises to the cilium. The protein localises to the flagellum. Functionally, required for formation of the sperm connecting piece during spermiogenesis. Sperm connecting piece is essential for linking the developing flagellum to the head during late spermiogenesis. May be involved in myosin-based microfilament transport through interaction with myosin subunits. The polypeptide is Spermatogenesis-associated protein 6 (SPATA6) (Homo sapiens (Human)).